The chain runs to 116 residues: Large-conductance mechanosensitive channel (116 aa).

Helical transmembrane passes span 7-27 and 64-84; these read EFAL…GAAF and GLFI…FIFV.

The protein belongs to the MscL family. In terms of assembly, homopentamer.

It is found in the cell membrane. Functionally, channel that opens in response to stretch forces in the membrane lipid bilayer. May participate in the regulation of osmotic pressure changes within the cell. The chain is Large-conductance mechanosensitive channel from Staphylococcus epidermidis (strain ATCC 35984 / DSM 28319 / BCRC 17069 / CCUG 31568 / BM 3577 / RP62A).